The following is a 180-amino-acid chain: MNKKTNLIWIDLEMTGLIPEKDVIIEIATIVTNVQLHIIAQGPSLVIHQNDEILSNMDQWNTEHHTSSGLLRRVRESSLSCKQAEAQTLEFLKKYVHTGASPMCGNTICQDRRFLYNYMPTLERFFHYRHIDVSTLKELVIRWKPNAKMIFEKDSAHLALSDIQDSIDELKHYRNVFINV.

In terms of domain architecture, Exonuclease spans L7–L170. The active site involves Y128.

Belongs to the oligoribonuclease family.

Its subcellular location is the cytoplasm. Its function is as follows. 3'-to-5' exoribonuclease specific for small oligoribonucleotides. This Ruthia magnifica subsp. Calyptogena magnifica protein is Oligoribonuclease.